The chain runs to 342 residues: Methionine import ATP-binding protein MetN 2 (342 aa).

The ABC transporter domain occupies 2-241 (ISIEGLSKVF…PKQLVTRKFV (240 aa)). Residue 38-45 (GYSGAGKS) coordinates ATP.

This sequence belongs to the ABC transporter superfamily. Methionine importer (TC 3.A.1.24) family. As to quaternary structure, the complex is composed of two ATP-binding proteins (MetN), two transmembrane proteins (MetI) and a solute-binding protein (MetQ).

The protein localises to the cell membrane. It catalyses the reaction L-methionine(out) + ATP + H2O = L-methionine(in) + ADP + phosphate + H(+). The catalysed reaction is D-methionine(out) + ATP + H2O = D-methionine(in) + ADP + phosphate + H(+). Functionally, part of the ABC transporter complex MetNIQ involved in methionine import. Responsible for energy coupling to the transport system. This chain is Methionine import ATP-binding protein MetN 2, found in Oceanobacillus iheyensis (strain DSM 14371 / CIP 107618 / JCM 11309 / KCTC 3954 / HTE831).